A 296-amino-acid polypeptide reads, in one-letter code: uncharacterized protein (296 aa).

The protein localises to the mitochondrion. This is an uncharacterized protein from Podospora anserina (strain S / ATCC MYA-4624 / DSM 980 / FGSC 10383) (Pleurage anserina).